The sequence spans 661 residues: Fusaric acid cluster transcription factor FUB12 (661 aa).

The segment at residues 17 to 48 (CVPCRTRKIKCNAAVVGLPCGSCVSRECPDEC) is a DNA-binding region (zn(2)-C6 fungal-type). 2 disordered regions span residues 56 to 132 (RTVK…PPGQ) and 151 to 184 (SAAQ…PQLD). The span at 73 to 98 (PDTNGSVLSPRQQQLPTNVSRQATDS) shows a compositional bias: polar residues. Positions 99–109 (SHSDPVEESIH) are enriched in basic and acidic residues. Residues 110–119 (ASHTGSSLRN) show a composition bias toward polar residues. Positions 120 to 129 (DTPHSRDRRP) are enriched in basic and acidic residues.

The protein localises to the nucleus. Functionally, transcription factor that is involved in the formation of the two Fusaric acid derivatives, dehydrofusaric acid and fusarinolic acid, serving as a detoxification mechanism. This Gibberella moniliformis (strain M3125 / FGSC 7600) (Maize ear and stalk rot fungus) protein is Fusaric acid cluster transcription factor FUB12.